A 334-amino-acid polypeptide reads, in one-letter code: Probable fructose-bisphosphate aldolase class 1 (334 aa).

Belongs to the class I fructose-bisphosphate aldolase family.

It carries out the reaction beta-D-fructose 1,6-bisphosphate = D-glyceraldehyde 3-phosphate + dihydroxyacetone phosphate. It functions in the pathway carbohydrate degradation; glycolysis; D-glyceraldehyde 3-phosphate and glycerone phosphate from D-glucose: step 4/4. This Xylella fastidiosa (strain 9a5c) protein is Probable fructose-bisphosphate aldolase class 1.